A 229-amino-acid polypeptide reads, in one-letter code: MKPRTPPDSPQLFQAVPLVPDFRLELKARKAGHWPVAGADEAGRGPLAGPVVAAAVILDPKRIPEGLNDSKQLSAQRREELFVQILATATVSIASSSSTRIDETDIRKASLDAMRRAICSLAIPASYVLTDGLDVPPGLDCPGQAVIKGDARSVSIAAASIVAKVTRDRMMARAHHVFPDYGFAAHVGYGTAQHRAGIEKLGPCSLHRMSFRPLRKVEDGPQMDELISE.

In terms of domain architecture, RNase H type-2 spans 34–223; that stretch reads WPVAGADEAG…LRKVEDGPQM (190 aa). Asp-40, Glu-41, and Asp-131 together coordinate a divalent metal cation.

Belongs to the RNase HII family. Mn(2+) serves as cofactor. It depends on Mg(2+) as a cofactor.

It is found in the cytoplasm. The enzyme catalyses Endonucleolytic cleavage to 5'-phosphomonoester.. Endonuclease that specifically degrades the RNA of RNA-DNA hybrids. The polypeptide is Ribonuclease HII (Rhizobium leguminosarum bv. trifolii (strain WSM2304)).